The primary structure comprises 351 residues: Deoxyguanosinetriphosphate triphosphohydrolase-like protein (351 aa).

Positions 75-196 (RLTHTLEVAE…VRVADIIAYL (122 aa)) constitute an HD domain.

Belongs to the dGTPase family. Type 2 subfamily.

This Desulfatibacillum aliphaticivorans protein is Deoxyguanosinetriphosphate triphosphohydrolase-like protein.